A 124-amino-acid polypeptide reads, in one-letter code: Glycine cleavage system H protein (124 aa).

A Lipoyl-binding domain is found at leucine 22–lysine 104. N6-lipoyllysine is present on lysine 63.

Belongs to the GcvH family. The glycine cleavage system is composed of four proteins: P, T, L and H. (R)-lipoate serves as cofactor.

The glycine cleavage system catalyzes the degradation of glycine. The H protein shuttles the methylamine group of glycine from the P protein to the T protein. In Acinetobacter baumannii (strain SDF), this protein is Glycine cleavage system H protein.